The primary structure comprises 436 residues: GTPase Der (436 aa).

2 consecutive EngA-type G domains span residues 4–167 (PTVA…PVEE) and 175–351 (IRFS…ESQN). GTP-binding positions include 10–17 (GRPNVGKS), 57–61 (DTGGI), 119–122 (NKVD), 181–188 (GRPNVGKS), 229–233 (DTAGM), and 294–297 (NKWD). Residues 352–436 (KRIPSAVLND…PIHLIARKRK (85 aa)) form the KH-like domain.

The protein belongs to the TRAFAC class TrmE-Era-EngA-EngB-Septin-like GTPase superfamily. EngA (Der) GTPase family. In terms of assembly, associates with the 50S ribosomal subunit.

Its function is as follows. GTPase that plays an essential role in the late steps of ribosome biogenesis. In Streptococcus uberis (strain ATCC BAA-854 / 0140J), this protein is GTPase Der.